The primary structure comprises 295 residues: N-acetylmuramic acid 6-phosphate etherase (295 aa).

In terms of domain architecture, SIS spans 54–217 (VIAAFRRGGR…STASMVGIGK (164 aa)). Glu82 acts as the Proton donor in catalysis. Glu113 is a catalytic residue.

The protein belongs to the GCKR-like family. MurNAc-6-P etherase subfamily. As to quaternary structure, homodimer.

It carries out the reaction N-acetyl-D-muramate 6-phosphate + H2O = N-acetyl-D-glucosamine 6-phosphate + (R)-lactate. It participates in amino-sugar metabolism; N-acetylmuramate degradation. In terms of biological role, specifically catalyzes the cleavage of the D-lactyl ether substituent of MurNAc 6-phosphate, producing GlcNAc 6-phosphate and D-lactate. The polypeptide is N-acetylmuramic acid 6-phosphate etherase (Geobacillus thermodenitrificans (strain NG80-2)).